Reading from the N-terminus, the 470-residue chain is Neuraminidase (470 aa).

Topologically, residues 1–14 (MNPNQKIITIGSVS) are intravirion. The tract at residues 11-32 (GSVSLGLVVLNILLHIVSITIT) is involved in apical transport and lipid raft association. A helical transmembrane segment spans residues 15-35 (LGLVVLNILLHIVSITITVLV). The segment at 32-86 (TVLVLPGNGNNGSCNETVIREYNETVRIEKITQWHNTNVIEYIERPESDHFMNNT) is hypervariable stalk region. Over 36 to 470 (LPGNGNNGSC…AILPFDIDKM (435 aa)) the chain is Virion surface. N-linked (GlcNAc...) asparagine; by host glycans are attached at residues Asn42, Asn46, Asn54, and Asn84. The interval 89–470 (LCDAKGFAPF…AILPFDIDKM (382 aa)) is head of neuraminidase. Intrachain disulfides connect Cys90–Cys417, Cys122–Cys127, Cys182–Cys229, Cys231–Cys236, Cys277–Cys290, Cys279–Cys288, Cys316–Cys335, and Cys421–Cys446. Arg116 contacts substrate. An N-linked (GlcNAc...) asparagine; by host glycan is attached at Asn144. Asp149 functions as the Proton donor/acceptor in the catalytic mechanism. Arg150 is a substrate binding site. 275-276 (EE) contacts substrate. A substrate-binding site is contributed by Arg291. Asp292 is a binding site for Ca(2+). Asn293 carries an N-linked (GlcNAc...) asparagine; by host glycan. Ca(2+) is bound by residues Gly296 and Asp322. Residue Arg368 participates in substrate binding. Asn398 carries N-linked (GlcNAc...) asparagine; by host glycosylation. Catalysis depends on Tyr402, which acts as the Nucleophile.

Belongs to the glycosyl hydrolase 34 family. In terms of assembly, homotetramer. The cofactor is Ca(2+). N-glycosylated.

It is found in the virion membrane. The protein localises to the host apical cell membrane. The catalysed reaction is Hydrolysis of alpha-(2-&gt;3)-, alpha-(2-&gt;6)-, alpha-(2-&gt;8)- glycosidic linkages of terminal sialic acid residues in oligosaccharides, glycoproteins, glycolipids, colominic acid and synthetic substrates.. Inhibited by the neuraminidase inhibitors zanamivir (Relenza) and oseltamivir (Tamiflu). These drugs interfere with the release of progeny virus from infected cells and are effective against all influenza strains. Resistance to neuraminidase inhibitors is quite rare. Catalyzes the removal of terminal sialic acid residues from viral and cellular glycoconjugates. Cleaves off the terminal sialic acids on the glycosylated HA during virus budding to facilitate virus release. Additionally helps virus spread through the circulation by further removing sialic acids from the cell surface. These cleavages prevent self-aggregation and ensure the efficient spread of the progeny virus from cell to cell. Otherwise, infection would be limited to one round of replication. Described as a receptor-destroying enzyme because it cleaves a terminal sialic acid from the cellular receptors. May facilitate viral invasion of the upper airways by cleaving the sialic acid moieties on the mucin of the airway epithelial cells. Likely to plays a role in the budding process through its association with lipid rafts during intracellular transport. May additionally display a raft-association independent effect on budding. Plays a role in the determination of host range restriction on replication and virulence. Sialidase activity in late endosome/lysosome traffic seems to enhance virus replication. This Influenza A virus (strain A/Guinea fowl/New York/4-3587/1984 H3N8) protein is Neuraminidase.